The sequence spans 442 residues: Protein translocase subunit SecF (442 aa).

A disordered region spans residues 1–39; sequence MASKAKTGRDDEATSAVELTEATESAVARTDGDSTTDTA. 6 consecutive transmembrane segments (helical) span residues 67–87, 187–207, 218–238, 243–263, 301–321, and 331–351; these read WFGV…FRGF, ITKK…LYIT, AITA…LVGF, ATVI…VIVF, LIGV…LGVG, and LIGI…LLVT. The tract at residues 366-442 is disordered; sequence VLKRRNSGSP…PTGKRNAGRR (77 aa). Low complexity predominate over residues 402–432; it reads QASSQSAPRAAQGSSKPAPGARPVRPVGTRR. Basic residues predominate over residues 433-442; it reads PTGKRNAGRR.

This sequence belongs to the SecD/SecF family. SecF subfamily. In terms of assembly, forms a complex with SecD. Part of the essential Sec protein translocation apparatus which comprises SecA, SecYEG and auxiliary proteins SecDF. Other proteins may also be involved.

It localises to the cell membrane. Its function is as follows. Part of the Sec protein translocase complex. Interacts with the SecYEG preprotein conducting channel. SecDF uses the proton motive force (PMF) to complete protein translocation after the ATP-dependent function of SecA. This chain is Protein translocase subunit SecF, found in Mycobacterium tuberculosis (strain CDC 1551 / Oshkosh).